Consider the following 302-residue polypeptide: Ventral anterior homeobox 2a (302 aa).

5 disordered regions span residues 1–35 (MFDQ…RDKG), 50–73 (KDIP…SQST), 156–175 (RRTK…SSST), 199–223 (PPNL…LGTS), and 282–302 (AFEP…KSTS). Positions 105 to 164 (PKRTRTSFTAEQLYRLELEFQRCQYVVGRERTELARQLNLSETQVKVWFQNRRTKQKKDQ) form a DNA-binding region, homeobox. Basic and acidic residues predominate over residues 161-172 (KKDQSRDSEKRS). Positions 204-223 (SSSQNNMGTSSGNGTNLGTS) are enriched in low complexity. The segment covering 287–296 (TRLDRKDTAS) has biased composition (basic and acidic residues).

Belongs to the EMX homeobox family.

Its subcellular location is the nucleus. Transcription factor that may function in dorsoventral specification of the forebrain. Regulates the expression of Wnt signaling antagonists including the expression of a truncated tcf7l2 isoform that cannot bind ctnnb1 and acts therefore as a potent dominant-negative Wnt antagonist. Plays a crucial role in eye development and, in particular, in the specification of the ventral optic vesicle. May be a regulator of axial polarization in the retina. The polypeptide is Ventral anterior homeobox 2a (vax2-a) (Xenopus laevis (African clawed frog)).